Consider the following 224-residue polypeptide: Heme response regulator HssR (224 aa).

One can recognise a Response regulatory domain in the interval 3 to 116; that stretch reads QCLVVDDDPR…ELIFRIRAVL (114 aa). Aspartate 52 is modified (4-aspartylphosphate). A DNA-binding region (ompR/PhoB-type) is located at residues 124-222; the sequence is NSEMTIGNLT…VRGQGYKVEN (99 aa).

Post-translationally, phosphorylated by HssS.

It localises to the cytoplasm. Member of the two-component regulatory system HssS/HssR involved in intracellular heme homeostasis and tempering of staphylococcal virulence. Phosphorylated HssR binds to a direct repeat sequence within hrtAB promoter and activates the expression of hrtAB, an efflux pump, in response to extracellular heme, hemin, hemoglobin or blood. The protein is Heme response regulator HssR (hssR) of Staphylococcus aureus (strain Mu50 / ATCC 700699).